The following is a 369-amino-acid chain: DNA polymerase processivity factor (369 aa).

Positions 345-369 (IGSRKRGPSSPPFEREGKLAKVINQ) are disordered.

This sequence belongs to the herpesviridae DNA polymerase processivity factor family. In terms of assembly, interacts with the DNA polymerase catalytic subunit. Interacts with the origin-binding protein.

It localises to the host nucleus. In terms of biological role, plays an essential role in viral DNA replication by acting as the polymerase accessory subunit. Associates with the viral polymerase to increase its processivity and forms high-affinity direct interactions with DNA. Facilitates the origin-binding protein UL9 loading onto DNA thus increasing its ability to assemble into a functional complex capable of unwinding duplex DNA. This Gallus gallus (Chicken) protein is DNA polymerase processivity factor (MDV055).